The chain runs to 1300 residues: MSIYQEFVNKYSLSKTLRFELIPQGKTLENIKARGLILDDEKRAKDYKKAKQIIDKYHQFFIEEILSSVCISEDLLQNYSDVYFKLKKSDDDNLQKDFKSAKDTIKKQISEYIKDSEKFKNLFNQNLIDAKKGQESDLILWLKQSKDNGIELFKANSDITDIDEALEIIKSFKGWTTYFKGFHENRKNVYSSNDIPTSIIYRIVDDNLPKFLENKAKYESLKDKAPEAINYEQIKKDLAEELTFDIDYKTSEVNQRVFSLDEVFEIANFNNYLNQSGITKFNTIIGGKFVNGENTKRKGINEYINLYSQQINDKTLKKYKMSVLFKQILSDTESKSFVIDKLEDDSDVVTTMQSFYEQIAAFKTVEEKSIKETLSLLFDDLKAQKLDLSKIYFKNDKSLTDLSQQVFDDYSVIGTAVLEYITQQIAPKNLDNPSKKEQELIAKKTEKAKYLSLETIKLALEEFNKHRDIDKQCRFEEILANFAAIPMIFDEIAQNKDNLAQISIKYQNQGKKDLLQASAEDDVKAIKDLLDQTNNLLHKLKIFHISQSEDKANILDKDEHFYLVFEECYFELANIVPLYNKIRNYITQKPYSDEKFKLNFENSTLANGWDKNKEPDNTAILFIKDDKYYLGVMNKKNNKIFDDKAIKENKGEGYKKIVYKLLPGANKMLPKVFFSAKSIKFYNPSEDILRIRNHSTHTKNGSPQKGYEKFEFNIEDCRKFIDFYKQSISKHPEWKDFGFRFSDTQRYNSIDEFYREVENQGYKLTFENISESYIDSVVNQGKLYLFQIYNKDFSAYSKGRPNLHTLYWKALFDERNLQDVVYKLNGEAELFYRKQSIPKKITHPAKEAIANKNKDNPKKESVFEYDLIKDKRFTEDKFFFHCPITINFKSSGANKFNDEINLLLKEKANDVHILSIDRGERHLAYYTLVDGKGNIIKQDTFNIIGNDRMKTNYHDKLAAIEKDRDSARKDWKKINNIKEMKEGYLSQVVHEIAKLVIEYNAIVVFEDLNFGFKRGRFKVEKQVYQKLEKMLIEKLNYLVFKDNEFDKTGGVLRAYQLTAPFETFKKMGKQTGIIYYVPAGFTSKICPVTGFVNQLYPKYESVSKSQEFFSKFDKICYNLDKGYFEFSFDYKNFGDKAAKGKWTIASFGSRLINFRNSDKNHNWDTREVYPTKELEKLLKDYSIEYGHGECIKAAICGESDKKFFAKLTSVLNTILQMRNSKTGTELDYLISPVADVNGNFFDSRQAPKNMPQDADANGAYHIGLKGLMLLGRIKNNQEGKKLNLVIKNEEYFEFVQNRNN.

The tract at residues 1–24 (MSIYQEFVNKYSLSKTLRFELIPQ) is wedge region 1. Recognition domain regions lie at residues 25-339 (GKTL…SFVI) and 340-591 (DKLE…QKPY). Binds crRNA alone and in crRNA-target DNA heteroduplex stretches follow at residues 47-51 (YKKAK) and 182-186 (FHENR). Positions 301–305 (NEYIN) are binds DNA in crRNA-target DNA heteroduplex. 2 binds crRNA in crRNA-target DNA heteroduplex regions span residues 326 to 329 (KQIL) and 538 to 541 (HKLK). Residues 591–595 (YSDEK) are binds crRNA. Residues 592 to 662 (SDEKFKLNFE…GYKKIVYKLL (71 aa)) form a wedge region 2 region. The tract at residues 662–679 (LPGANKMLPKVFFSAKSI) is LKL, important for PAM recognition and DNA unwinding. The PAM-interacting domain (PI) stretch occupies residues 663–762 (PGANKMLPKV…FYREVENQGY (100 aa)). The tract at residues 671-677 (KVFFSAK) is binds DNA protospacer adjacent motif (PAM) on target DNA. The binds single-strand non-target DNA stretch occupies residues 692–704 (RNHSTHTKNGSPQ). Positions 763 to 892 (KLTFENISES…PITINFKSSG (130 aa)) are wedge region 3. 2 binds crRNA regions span residues 791–794 (KDFS) and 803–804 (LH). Catalysis depends on for pre-crRNA processing residues His-843, Lys-852, and Lys-869. Binds crRNA regions lie at residues 851–853 (NKN) and 865–873 (YDLIKDKRF). Positions 893–953 (ANKFNDEINL…IGNDRMKTNY (61 aa)) are ruvC-I. Asp-917 serves as the catalytic For DNase activity of RuvC domain. The tract at residues 954 to 971 (HDKLAAIEKDRDSARKDW) is bridge helix. Positions 972–1078 (KKINNIKEMK…KQTGIIYYVP (107 aa)) are ruvC-II. Glu-1006 serves as the catalytic For DNase activity of RuvC domain. Residues 1079–1254 (AGFTSKICPV…QAPKNMPQDA (176 aa)) are nuclease domain. The active-site For DNase activity of RuvC domain is the Asp-1255. The segment at 1255 to 1300 (DANGAYHIGLKGLMLLGRIKNNQEGKKLNLVIKNEEYFEFVQNRNN) is ruvC-III.

The protein belongs to the CRISPR-associated endonuclease Cas12a family. In terms of assembly, might be a homodimer. Might be a monomer. The cofactor is Ca(2+). Mg(2+) is required as a cofactor.

The enzyme catalyses Endonucleolytic cleavage to 5'-phosphodinucleotide and 5'-phosphooligonucleotide end-products.. It carries out the reaction RNA = a 5'-hydroxy-ribonucleotide + n nucleoside-2',3'-cyclophosphates.. Functionally, CRISPR (clustered regularly interspaced short palindromic repeat), is an adaptive immune system that provides protection against mobile genetic elements (viruses, transposable elements and conjugative plasmids). CRISPR clusters contain sequences complementary to antecedent mobile elements and target invading nucleic acids. CRISPR clusters are transcribed and processed into CRISPR RNA (crRNA). Has endonuclease activity on pre-crRNA and dsDNA, using different active sites. A single-RNA guided endonuclease that is also capable of guiding crRNA processing; correct processing of pre-crRNA requires only this protein and the CRISPR locus. pre-crRNA processing proceeds by an intramolecular nucleophilic attack on the scissile phosphate by the 2'-OH of the upstream ribonucleotide, the divalent cation (which is bound by the crRNA) is probably required for ordering the crRNA pseudoknot and/or increasing RNA binding. RNA mutagenesis studies show pre-crRNA cleavage is highly sequence- and structure-specific. Forms a complex with crRNA and complementary dsDNA, where the crRNA displaces the non-target DNA strand and directs endonucleolytic cleavage of both strands of the DNA. Cleavage results in staggered 5-base 5' overhangs 14-18 and 21-23 bases downstream of the PAM (protospacer adjacent motif) on the non-target and target strands respectively. Both target and non-target strand DNA are probably independently cleaved in the same active site. When this protein is expressed in E.coli it prevents plasmids homologous to the first CRISPR spacer from transforming, formally showing it is responsible for plasmid immunity. This is CRISPR-associated endonuclease Cas12a from Francisella tularensis subsp. novicida (strain U112).